Consider the following 98-residue polypeptide: Growth-regulated protein homolog gamma (98 aa).

An N-terminal signal peptide occupies residues 1-29 (MAPAASSAPRLLRAAMLLLLLVAAGRRAA). Intrachain disulfides connect Cys39-Cys65 and Cys41-Cys81.

It belongs to the intercrine alpha (chemokine CxC) family.

The protein localises to the secreted. This Bos taurus (Bovine) protein is Growth-regulated protein homolog gamma.